The following is a 119-amino-acid chain: Protein TusC (119 aa).

Belongs to the DsrF/TusC family. In terms of assembly, heterohexamer, formed by a dimer of trimers. The hexameric TusBCD complex contains 2 copies each of TusB, TusC and TusD. The TusBCD complex interacts with TusE.

Its subcellular location is the cytoplasm. In terms of biological role, part of a sulfur-relay system required for 2-thiolation of 5-methylaminomethyl-2-thiouridine (mnm(5)s(2)U) at tRNA wobble positions. In Escherichia fergusonii (strain ATCC 35469 / DSM 13698 / CCUG 18766 / IAM 14443 / JCM 21226 / LMG 7866 / NBRC 102419 / NCTC 12128 / CDC 0568-73), this protein is Protein TusC.